The sequence spans 312 residues: Ornithine carbamoyltransferase (312 aa).

Carbamoyl phosphate contacts are provided by residues 60 to 63, glutamine 87, arginine 111, and 138 to 141; these read STRT and HPCQ. Residues asparagine 169, aspartate 229, and 233 to 234 contribute to the L-ornithine site; that span reads SM. Residues 268–269 and arginine 296 contribute to the carbamoyl phosphate site; that span reads CL.

This sequence belongs to the aspartate/ornithine carbamoyltransferase superfamily. OTCase family.

Its subcellular location is the cytoplasm. The catalysed reaction is carbamoyl phosphate + L-ornithine = L-citrulline + phosphate + H(+). It functions in the pathway amino-acid biosynthesis; L-arginine biosynthesis; L-arginine from L-ornithine and carbamoyl phosphate: step 1/3. In terms of biological role, reversibly catalyzes the transfer of the carbamoyl group from carbamoyl phosphate (CP) to the N(epsilon) atom of ornithine (ORN) to produce L-citrulline. The protein is Ornithine carbamoyltransferase of Rhodopseudomonas palustris (strain BisA53).